The sequence spans 181 residues: dTDP-4-dehydrorhamnose 3,5-epimerase (181 aa).

Substrate-binding positions include Arg-23, Glu-28, 47-49 (QDN), and Arg-59. The active-site Proton acceptor is His-62. Substrate-binding residues include Lys-72 and His-119. The active-site Proton donor is the Tyr-132. Substrate is bound by residues Glu-143 and Lys-167.

It belongs to the dTDP-4-dehydrorhamnose 3,5-epimerase family. As to quaternary structure, homodimer.

It catalyses the reaction dTDP-4-dehydro-6-deoxy-alpha-D-glucose = dTDP-4-dehydro-beta-L-rhamnose. The protein operates within carbohydrate biosynthesis; dTDP-L-rhamnose biosynthesis. It functions in the pathway bacterial outer membrane biogenesis; LPS O-antigen biosynthesis. Its function is as follows. Catalyzes the epimerization of the C3' and C5'positions of dTDP-6-deoxy-D-xylo-4-hexulose, forming dTDP-6-deoxy-L-lyxo-4-hexulose. This is dTDP-4-dehydrorhamnose 3,5-epimerase (rfbC) from Shigella flexneri.